A 253-amino-acid polypeptide reads, in one-letter code: Sulfate transporter CysZ (253 aa).

4 helical membrane passes run 31-51 (FVILPLLVNILLMGGAFWWLF), 75-95 (LLWPLAVISVLLVFGYFFSTI), 151-171 (IVLLILYFIPGIGQTVAPVLW), and 222-242 (IPLLNLFIMPVAVCGATAMWV).

This sequence belongs to the CysZ family.

Its subcellular location is the cell inner membrane. In terms of biological role, high affinity, high specificity proton-dependent sulfate transporter, which mediates sulfate uptake. Provides the sulfur source for the cysteine synthesis pathway. The polypeptide is Sulfate transporter CysZ (Escherichia coli O81 (strain ED1a)).